We begin with the raw amino-acid sequence, 485 residues long: ATP synthase subunit beta (485 aa).

Over residues 1 to 11 (MPATETADKNT) the composition is skewed to basic and acidic residues. A disordered region spans residues 1 to 20 (MPATETADKNTKSANSDTSG). ATP is bound at residue 170-177 (GGAGVGKT).

This sequence belongs to the ATPase alpha/beta chains family. In terms of assembly, F-type ATPases have 2 components, CF(1) - the catalytic core - and CF(0) - the membrane proton channel. CF(1) has five subunits: alpha(3), beta(3), gamma(1), delta(1), epsilon(1). CF(0) has three main subunits: a(1), b(2) and c(9-12). The alpha and beta chains form an alternating ring which encloses part of the gamma chain. CF(1) is attached to CF(0) by a central stalk formed by the gamma and epsilon chains, while a peripheral stalk is formed by the delta and b chains.

The protein resides in the cell membrane. It carries out the reaction ATP + H2O + 4 H(+)(in) = ADP + phosphate + 5 H(+)(out). Functionally, produces ATP from ADP in the presence of a proton gradient across the membrane. The catalytic sites are hosted primarily by the beta subunits. This is ATP synthase subunit beta from Mycolicibacterium paratuberculosis (strain ATCC BAA-968 / K-10) (Mycobacterium paratuberculosis).